Consider the following 526-residue polypeptide: MNKVLIFDRNMYPRGVKKNVLGRQRYGLKTIKRTLVHKPANKYVSRFTKQFHRRIIPIKQLDESKLDALSLRELEQLKLIIEEKQEEKRAQTHALTFFANLPTAPFGSSYTAEALGLRKYSGEARDPAHRIRDRFPRNHEKIYLEKEELMTTDLLLRYKNCLNSLNREQHQQILGDRVFSLTNSPSLAFSLAIIEEACIYYKYHFVHNLPIDPQDLFMYTITIMKFEYFNKLNMAKLCCVFNDNGHGDIEYRIFRQLCGKPVYDRDMPNTEYEVQQQTPGSFQYPAQQALSFIVTFARILRQIKERILQTKQPQFIRDFDQDRVSEQYQCGMISRLVGDQFNNHQCDDIGCQTRIQRMMSPWKPSLYFCTYLPKEFVEFGLHPNMPEEYNSFNVACSTTPSCSFASQQSKQTVQLNLQTKKQAKCKKLLTADKTNKGQKTNELRENRLKKDWSKEVDSIDFETNTTLQEDETRFVFIENDTSMKSAKIKENNGEENSDNEMELDLDYEDVETCETDINDTDSDDSD.

Residues Cys-239, His-344, Cys-346, and Cys-351 each coordinate Zn(2+). The segment at 239–351 adopts a CHC2-type zinc-finger fold; it reads CVFNDNGHGD…NNHQCDDIGC (113 aa).

It belongs to the HHV-1 ICP27 protein family.

The protein resides in the virion tegument. Its subcellular location is the virion. It localises to the host nucleus. The protein localises to the host cytoplasm. Functionally, immediate early (EI) protein that plays many roles during productive infection including regulation of viral gene expression and nuclear export of intronless viral RNAs. The protein is mRNA export factor ICP27 homolog of Human herpesvirus 7 (strain JI) (HHV-7).